Reading from the N-terminus, the 942-residue chain is UvrABC system protein A (942 aa).

ATP is bound at residue 32–39 (GLSGSGKS). Residues 251–278 (CPVCGFTVPELEPRLFSFNAPFGSCPTC) form a C4-type zinc finger. ABC transporter domains are found at residues 308 to 589 (WNPI…KKSI) and 609 to 937 (GNGR…HYLK). 641–648 (GVSGSGKS) is an ATP binding site. The segment at 740–766 (CEACSGDGIIKIEMHFLPDVYVPCEVC) adopts a C4-type zinc-finger fold.

This sequence belongs to the ABC transporter superfamily. UvrA family. In terms of assembly, forms a heterotetramer with UvrB during the search for lesions.

It localises to the cytoplasm. The UvrABC repair system catalyzes the recognition and processing of DNA lesions. UvrA is an ATPase and a DNA-binding protein. A damage recognition complex composed of 2 UvrA and 2 UvrB subunits scans DNA for abnormalities. When the presence of a lesion has been verified by UvrB, the UvrA molecules dissociate. This chain is UvrABC system protein A, found in Streptococcus pyogenes serotype M1.